The primary structure comprises 382 residues: Chaperone protein DnaJ (382 aa).

Residues 5-70 form the J domain; it reads DYYEVLGLKK…QKRAAYDQYG (66 aa). The CR-type zinc-finger motif lies at 134 to 212; sequence GTTKDIQINT…CHGEGRVHKK (79 aa). Zn(2+) is bound by residues Cys147, Cys150, Cys164, Cys167, Cys186, Cys189, Cys200, and Cys203. CXXCXGXG motif repeat units lie at residues 147 to 154, 164 to 171, 186 to 193, and 200 to 207; these read CDSCGGSG, CPHCHGSG, CPSCHGSG, and CRSCHGEG.

This sequence belongs to the DnaJ family. As to quaternary structure, homodimer. The cofactor is Zn(2+).

The protein resides in the cytoplasm. Participates actively in the response to hyperosmotic and heat shock by preventing the aggregation of stress-denatured proteins and by disaggregating proteins, also in an autonomous, DnaK-independent fashion. Unfolded proteins bind initially to DnaJ; upon interaction with the DnaJ-bound protein, DnaK hydrolyzes its bound ATP, resulting in the formation of a stable complex. GrpE releases ADP from DnaK; ATP binding to DnaK triggers the release of the substrate protein, thus completing the reaction cycle. Several rounds of ATP-dependent interactions between DnaJ, DnaK and GrpE are required for fully efficient folding. Also involved, together with DnaK and GrpE, in the DNA replication of plasmids through activation of initiation proteins. This Haemophilus influenzae (strain PittGG) protein is Chaperone protein DnaJ.